A 470-amino-acid polypeptide reads, in one-letter code: Putative multidrug resistance protein MdtD (470 aa).

Over 1–11 (MTELPDNTRWQ) the chain is Periplasmic. The chain crosses the membrane as a helical span at residues 12-32 (LWIVAFGFFMQSLDTTIVNTA). The Cytoplasmic portion of the chain corresponds to 33–48 (LPSMAKSLGESPLHMH). A helical membrane pass occupies residues 49 to 69 (MVVVSYVLTVAVMLPASGWLA). Topologically, residues 70 to 76 (DKIGVRN) are periplasmic. Residues 77 to 97 (IFFAAIVLFTLGSLFCALSGT) form a helical membrane-spanning segment. Over 98–101 (LNQL) the chain is Cytoplasmic. Residues 102-124 (VLARVLQGVGGAMMVPVGRLTVM) form a helical membrane-spanning segment. Residues 125–137 (KIVPRAQYMAAMT) lie on the Periplasmic side of the membrane. A helical transmembrane segment spans residues 138 to 158 (FVTLPGQIGPLLGPALGGVLV). Residues 159-164 (EYASWH) lie on the Cytoplasmic side of the membrane. A helical transmembrane segment spans residues 165 to 185 (WIFLINIPVGIVGAMATFMLM). Residues 186-196 (PNYTIETRRFD) are Periplasmic-facing. The helical transmembrane segment at 197 to 217 (LPGFLLLAIGMAVLTLALDGS) threads the bilayer. Residues 218-224 (KSMGISP) lie on the Cytoplasmic side of the membrane. A helical transmembrane segment spans residues 225–245 (WTLAGLAAGGAAAILLYLFHA). At 246-262 (KKSSGALFSLRLFRTPT) the chain is on the periplasmic side. Residues 263-283 (FSLGLLGSFAGRIGSGMLPFM) form a helical membrane-spanning segment. Topologically, residues 284-285 (TP) are cytoplasmic. Residues 286–306 (VFLQIGLGFSPFHAGLMMIPM) traverse the membrane as a helical segment. Over 307-341 (VLGSMGMKRIVVQIVNRFGYRRVLVATTLGLALVS) the chain is Periplasmic. A helical transmembrane segment spans residues 342-362 (LLFMSVALLGWYYLLPLVLLL). Over 363–395 (QGMVNSARFSSMNTLTLKDLPDTLASSGNSLLS) the chain is Cytoplasmic. A helical membrane pass occupies residues 396-416 (MIMQLSMSIGVTIAGMLLGMF). At 417 to 430 (GQQHIGIDSSATHH) the chain is on the periplasmic side. The chain crosses the membrane as a helical span at residues 431–451 (VFMYTWLCMAVIIALPAIIFA). Over 452–470 (RVPNDTQQNMVISRRKRSL) the chain is Cytoplasmic.

This sequence belongs to the major facilitator superfamily. TCR/Tet family.

It is found in the cell inner membrane. The chain is Putative multidrug resistance protein MdtD from Salmonella paratyphi A (strain ATCC 9150 / SARB42).